The chain runs to 79 residues: Small ribosomal subunit protein uS17 (79 aa).

The protein belongs to the universal ribosomal protein uS17 family. In terms of assembly, part of the 30S ribosomal subunit.

One of the primary rRNA binding proteins, it binds specifically to the 5'-end of 16S ribosomal RNA. In Mesorhizobium japonicum (strain LMG 29417 / CECT 9101 / MAFF 303099) (Mesorhizobium loti (strain MAFF 303099)), this protein is Small ribosomal subunit protein uS17.